A 156-amino-acid polypeptide reads, in one-letter code: Snaclec A3 (156 aa).

A signal peptide spans 1 to 23 (MGRSISVSFGLLVVFLSLSGTGA). Disulfide bonds link C27/C38, C55/C154, and C129/C146. The 122-residue stretch at 34–155 (HEGHCYKVFN…CGQPYRFTCE (122 aa)) folds into the C-type lectin domain.

This sequence belongs to the snaclec family. As to quaternary structure, heterodimer; disulfide-linked. In terms of tissue distribution, expressed by the venom gland.

The protein localises to the secreted. Its function is as follows. Interferes with one step of hemostasis (modulation of platelet aggregation, or coagulation cascade, for example). This chain is Snaclec A3, found in Macrovipera lebetinus (Levantine viper).